Here is a 287-residue protein sequence, read N- to C-terminus: Coatomer subunit epsilon-1 (287 aa).

The protein belongs to the COPE family. In terms of assembly, oligomeric complex that consists of at least the alpha, beta, beta', gamma, delta, epsilon and zeta subunits.

It is found in the cytoplasm. The protein localises to the golgi apparatus membrane. It localises to the cytoplasmic vesicle. The protein resides in the COPI-coated vesicle membrane. In terms of biological role, the coatomer is a cytosolic protein complex that binds to dilysine motifs and reversibly associates with Golgi non-clathrin-coated vesicles, which further mediate biosynthetic protein transport from the ER, via the Golgi up to the trans Golgi network. The coatomer complex is required for budding from Golgi membranes, and is essential for the retrograde Golgi-to-ER transport of dilysine-tagged proteins. This Oryza sativa subsp. japonica (Rice) protein is Coatomer subunit epsilon-1 (COPE1).